Reading from the N-terminus, the 649-residue chain is Acetyl-coenzyme A synthetase (649 aa).

Residues 191–194 (RAGR), T311, and N335 contribute to the CoA site. Residues 387–389 (GEP), 411–416 (DTWWQT), D500, and R515 each bind ATP. Residue S523 coordinates CoA. R526 is a binding site for ATP. The Mg(2+) site is built by V537, F539, and I542. R584 provides a ligand contact to CoA. An N6-acetyllysine modification is found at K609.

It belongs to the ATP-dependent AMP-binding enzyme family. The cofactor is Mg(2+). In terms of processing, acetylated. Deacetylation by the SIR2-homolog deacetylase activates the enzyme.

The enzyme catalyses acetate + ATP + CoA = acetyl-CoA + AMP + diphosphate. Functionally, catalyzes the conversion of acetate into acetyl-CoA (AcCoA), an essential intermediate at the junction of anabolic and catabolic pathways. AcsA undergoes a two-step reaction. In the first half reaction, AcsA combines acetate with ATP to form acetyl-adenylate (AcAMP) intermediate. In the second half reaction, it can then transfer the acetyl group from AcAMP to the sulfhydryl group of CoA, forming the product AcCoA. The sequence is that of Acetyl-coenzyme A synthetase from Photobacterium profundum (strain SS9).